The following is a 933-amino-acid chain: Phosphoenolpyruvate carboxylase (933 aa).

Residues His-158 and Lys-592 contribute to the active site.

Belongs to the PEPCase type 1 family. Mg(2+) is required as a cofactor.

The catalysed reaction is oxaloacetate + phosphate = phosphoenolpyruvate + hydrogencarbonate. Functionally, forms oxaloacetate, a four-carbon dicarboxylic acid source for the tricarboxylic acid cycle. This chain is Phosphoenolpyruvate carboxylase, found in Nitrosomonas eutropha (strain DSM 101675 / C91 / Nm57).